A 370-amino-acid chain; its full sequence is uncharacterized protein (370 aa).

The N-terminal stretch at 1–27 (MSSAANEGCVYLFIVVLRLSSFSCVNS) is a signal peptide. N-linked (GlcNAc...) asparagine glycans are attached at residues asparagine 59, asparagine 98, and asparagine 126. Disordered regions lie at residues 81 to 101 (SRSHTKKADTRGTADGKNTTA) and 123 to 167 (LSEN…CHQP). Positions 139-148 (HDDDDDDDLE) are enriched in acidic residues. Residues asparagine 171, asparagine 221, asparagine 230, and asparagine 262 are each glycosylated (N-linked (GlcNAc...) asparagine).

This is an uncharacterized protein from Saccharomyces cerevisiae (strain ATCC 204508 / S288c) (Baker's yeast).